A 152-amino-acid polypeptide reads, in one-letter code: UPF0179 protein Mlab_1307 (152 aa).

The protein belongs to the UPF0179 family.

This chain is UPF0179 protein Mlab_1307, found in Methanocorpusculum labreanum (strain ATCC 43576 / DSM 4855 / Z).